A 215-amino-acid chain; its full sequence is Octanoyltransferase (215 aa).

One can recognise a BPL/LPL catalytic domain in the interval 31 to 206 (TTAPDEIWLV…QLVKHLDYAE (176 aa)). Substrate-binding positions include 70–77 (RGGQVTYH), 137–139 (SLG), and 150–152 (GLA). The active-site Acyl-thioester intermediate is Cys168.

It belongs to the LipB family.

The protein resides in the cytoplasm. It carries out the reaction octanoyl-[ACP] + L-lysyl-[protein] = N(6)-octanoyl-L-lysyl-[protein] + holo-[ACP] + H(+). It participates in protein modification; protein lipoylation via endogenous pathway; protein N(6)-(lipoyl)lysine from octanoyl-[acyl-carrier-protein]: step 1/2. In terms of biological role, catalyzes the transfer of endogenously produced octanoic acid from octanoyl-acyl-carrier-protein onto the lipoyl domains of lipoate-dependent enzymes. Lipoyl-ACP can also act as a substrate although octanoyl-ACP is likely to be the physiological substrate. The chain is Octanoyltransferase from Pseudomonas fluorescens (strain Pf0-1).